The following is a 269-amino-acid chain: Diadenylate cyclase (269 aa).

The 158-residue stretch at 109–266 folds into the DAC domain; the sequence is RSGIYDLFAN…GGKMILEIDP (158 aa).

Belongs to the adenylate cyclase family. DacZ subfamily. It depends on Mn(2+) as a cofactor.

It catalyses the reaction 2 ATP = 3',3'-c-di-AMP + 2 diphosphate. Its function is as follows. Diadenylate cyclase that catalyzes the condensation of 2 ATP molecules into cyclic di-AMP (c-di-AMP). c-di-AMP is a second messenger for intracellular signal transduction involved in the control of important regulatory processes such as osmoregulation. Is essential for H.volcanii. Overexpression of DacZ leads to cell death, suggesting the need for tight regulation of c-di-AMP levels. Cannot use GTP as substrate. The protein is Diadenylate cyclase of Haloferax volcanii (strain ATCC 29605 / DSM 3757 / JCM 8879 / NBRC 14742 / NCIMB 2012 / VKM B-1768 / DS2) (Halobacterium volcanii).